The chain runs to 212 residues: Ribonuclease HII (212 aa).

The region spanning 17–211 (RVLAGIDEAG…VLELLDLTDS (195 aa)) is the RNase H type-2 domain. A divalent metal cation-binding residues include D23, E24, and D120.

Belongs to the RNase HII family. The cofactor is Mn(2+). It depends on Mg(2+) as a cofactor.

The protein resides in the cytoplasm. It carries out the reaction Endonucleolytic cleavage to 5'-phosphomonoester.. Functionally, endonuclease that specifically degrades the RNA of RNA-DNA hybrids. This Chloroflexus aggregans (strain MD-66 / DSM 9485) protein is Ribonuclease HII.